Reading from the N-terminus, the 215-residue chain is MSKIYDWFEERLEIQSIADDISSKYVPPHVNIFYCFGGITFTCFLVQVATGFAMTFYYRPTVAEAFTSVQYLMTQVNFGWLIRSIHRWSASMMVLMMILHIFRVYLTGGFKKPRELTWVTGVLMAVCTVSFGVTGYSLPWDQIGYWAVKIVTGVPDAIPVIGQVLLELLRGGVAVGQSTLTRFYSLHTFVLPLFTAVFMLMHFLMIRKQGISGPL.

The helical transmembrane segment at 32 to 52 (IFYCFGGITFTCFLVQVATGF) threads the bilayer. Position 35 (C35) interacts with heme c. 2 residues coordinate heme b: H86 and H100. Helical transmembrane passes span 90–110 (ASMMVLMMILHIFRVYLTGGF), 116–136 (LTWVTGVLMAVCTVSFGVTGY), and 186–206 (LHTFVLPLFTAVFMLMHFLMI). Positions 187 and 202 each coordinate heme b.

It belongs to the cytochrome b family. PetB subfamily. As to quaternary structure, the 4 large subunits of the cytochrome b6-f complex are cytochrome b6, subunit IV (17 kDa polypeptide, PetD), cytochrome f and the Rieske protein, while the 4 small subunits are PetG, PetL, PetM and PetN. The complex functions as a dimer. The cofactor is heme b. It depends on heme c as a cofactor.

It localises to the plastid. The protein resides in the chloroplast thylakoid membrane. Functionally, component of the cytochrome b6-f complex, which mediates electron transfer between photosystem II (PSII) and photosystem I (PSI), cyclic electron flow around PSI, and state transitions. The sequence is that of Cytochrome b6 from Auxenochlorella protothecoides (Green microalga).